The primary structure comprises 632 residues: Arginine--tRNA ligase (632 aa).

A 'HIGH' region motif is present at residues 120–130 (ANPIHPLHIGH).

It belongs to the class-I aminoacyl-tRNA synthetase family.

Its subcellular location is the cytoplasm. It carries out the reaction tRNA(Arg) + L-arginine + ATP = L-arginyl-tRNA(Arg) + AMP + diphosphate. The protein is Arginine--tRNA ligase of Pyrobaculum islandicum (strain DSM 4184 / JCM 9189 / GEO3).